Here is a 149-residue protein sequence, read N- to C-terminus: MADKFNILLLNGPNLNMLGVREPEKYGTLTLAQIAARLDRRAQALGVSLHHIQSNAEHELIAQIHAAFGNTDFILVNPAAFTHTSVALRDALLAVQIPFIEIHLSNVHAREPFRHHSYLSDIAVGVICGLGAEGYEYALQAAVNRLNKS.

Catalysis depends on Tyr-26, which acts as the Proton acceptor. Residues Asn-77, His-83, and Asp-90 each coordinate substrate. His-103 serves as the catalytic Proton donor. Substrate contacts are provided by residues 104–105 (LS) and Arg-114.

This sequence belongs to the type-II 3-dehydroquinase family. In terms of assembly, homododecamer.

The catalysed reaction is 3-dehydroquinate = 3-dehydroshikimate + H2O. The protein operates within metabolic intermediate biosynthesis; chorismate biosynthesis; chorismate from D-erythrose 4-phosphate and phosphoenolpyruvate: step 3/7. Functionally, catalyzes a trans-dehydration via an enolate intermediate. This chain is 3-dehydroquinate dehydratase, found in Edwardsiella ictaluri (strain 93-146).